An 895-amino-acid chain; its full sequence is Iron-regulated surface determinant protein H (895 aa).

The signal sequence occupies residues 1-40 (MNKHHPKLRSFYSIRKSTLGVASVIVSTLFLITSQHQAQA). The disordered stretch occupies residues 42 to 85 (ENTNTSDKISENQNNNATTTQPPKDTNQTQPATQPANTAKNYPA). Residues 53–62 (NQNNNATTTQ) show a composition bias toward low complexity. Residues 63-81 (PPKDTNQTQPATQPANTAK) show a composition bias toward polar residues. Positions 105–232 (DIGPREQVNF…IYNDPSLVKS (128 aa)) constitute an NEAT 1 domain. Residues 241–324 (NDQSSSVASN…NQSDVNQQYP (84 aa)) form a disordered region. Residues 243–276 (QSSSVASNQTNTNTSNQNISTINNANNQPQATTN) are compositionally biased toward low complexity. The segment covering 277–323 (MSQPAQPKSSTNADQASSQPAHETNSNGNTNDKTNESSNQSDVNQQY) has biased composition (polar residues). NEAT domains lie at 345-471 (TADN…DYVD) and 543-660 (QLTD…TKDD). Disordered regions lie at residues 657-720 (TKDD…DNNI), 751-782 (QIAK…DSNK), and 841-868 (KTKE…GETT). Composition is skewed to polar residues over residues 663–677 (SQNN…QTGQ) and 687–697 (AENSSTATNPK). Composition is skewed to basic and acidic residues over residues 698–720 (DASD…DNNI), 751–765 (QIAK…KDAD), and 841–854 (KTKE…KENK). Over residues 855–868 (LSQSKMLPKTGETT) the composition is skewed to polar residues. The LPXTG sorting signal motif lies at 861–865 (LPKTG). Residue threonine 864 is modified to Pentaglycyl murein peptidoglycan amidated threonine. Residues 865 to 895 (GETTSSQSWWGLYALLGMLALFIPKFRKESK) constitute a propeptide, removed by sortase.

The protein belongs to the IsdH family.

The protein resides in the secreted. It is found in the cell wall. Binds human plasma haptoglobin-hemoglobin complexes, haptoglobin and hemoglobin. Binds haptoglobin-hemoglobin complexes with significantly higher affinity than haptoglobin alone. The protein is Iron-regulated surface determinant protein H (isdH) of Staphylococcus aureus (strain NCTC 8325 / PS 47).